The primary structure comprises 695 residues: MGCIFTKPSPEQQKFDGEDYECENKKNLNLISYIRNLLFGNNSHQQLYNEIIPTTTSTTSTTTNSVYQNIGLDGYNNNNNNNNNNNNNNNIMNNYGYDDYGYSYEEDEDYYDEMPIPTIVAQPQPQPQPQPQPQPQPQQPIRIVSQNQQIPTTPPQQISQFNITGNKSPSSIGSRHRSKPKETLRAHKKRHKDGHKMVNEYVFVRKLGKGTFGKVKLAYHHDTHHLYAIKIFNKIRLKKQTMGIGRPNAFDDVLKEIAIMKKMNHINVVKLYEVINDPQEEYIYIVMEYIEGGSIMSANETSEDLARKYFRDIVFGLEYLHEQKVIHKDLKPENLLVNSEGVVKITDFGVSHIFDDDDVVRCSRGSPAFLAPELCRNESQPISGKGVDVWALGVSLYCLIFARTPFISKTNSLLDIYDQIVNHEPTYPREISNDLMDLFKRLLDKNPLTRIQIAEIKSHKWTTISGTWPMNELDHLILSVTDQEMIDAISTDHTIKPSDNTTTDEDDSDLSSSSGGESSGIIGSSNESKSMYNNVNSKQKIQNQNQNQNQNQNQNQNQNQNQNHNQNQNQNQNQNNNNNSLIEKSNISIPASSSSISNNDSCYENRNVYIKDEEMNMICNDSVIMDPIKELNKIDGLNYGCDFQIGKEYSDFQYNSGHFIYDLVDENESQISRESANDYYLPFKTNKYLNNKSIV.

Disordered regions lie at residues 119–138 and 149–192; these read IVAQ…PQPQ and QIPT…KRHK. The span at 124-138 shows a compositional bias: pro residues; sequence QPQPQPQPQPQPQPQ. Residues 149-160 show a composition bias toward low complexity; sequence QIPTTPPQQISQ. Positions 161–173 are enriched in polar residues; the sequence is FNITGNKSPSSIG. A Protein kinase domain is found at 201–462; it reads YVFVRKLGKG…IAEIKSHKWT (262 aa). Residues 207-215 and Lys230 contribute to the ATP site; that span reads LGKGTFGKV. The Proton acceptor role is filled by Asp329. The segment at 491–580 is disordered; the sequence is TDHTIKPSDN…NQNQNNNNNS (90 aa). Residues 510–528 show a composition bias toward low complexity; that stretch reads LSSSSGGESSGIIGSSNES. Polar residues predominate over residues 529-541; the sequence is KSMYNNVNSKQKI. The span at 542-580 shows a compositional bias: low complexity; it reads QNQNQNQNQNQNQNQNQNQNQNHNQNQNQNQNQNNNNNS.

It belongs to the protein kinase superfamily. Ser/Thr protein kinase family.

It catalyses the reaction L-seryl-[protein] + ATP = O-phospho-L-seryl-[protein] + ADP + H(+). The catalysed reaction is L-threonyl-[protein] + ATP = O-phospho-L-threonyl-[protein] + ADP + H(+). The protein is Probable serine/threonine-protein kinase DDB_G0279405 of Dictyostelium discoideum (Social amoeba).